We begin with the raw amino-acid sequence, 198 residues long: Holliday junction branch migration complex subunit RuvA (198 aa).

The tract at residues 1 to 63 (MYDYIKGQLT…EDAQLLFGFH (63 aa)) is domain I. Residues 64–142 (SEEEKDVFLK…EAPKEESSKP (79 aa)) are domain II. The tract at residues 143 to 147 (PKAKQ) is flexible linker. Residues 148 to 198 (QGNEQLDEAVEALLALGYKATELKKIRAFFEGTSETAEQYIKSALKMLMKG) form a domain III region.

Belongs to the RuvA family. As to quaternary structure, homotetramer. Forms an RuvA(8)-RuvB(12)-Holliday junction (HJ) complex. HJ DNA is sandwiched between 2 RuvA tetramers; dsDNA enters through RuvA and exits via RuvB. An RuvB hexamer assembles on each DNA strand where it exits the tetramer. Each RuvB hexamer is contacted by two RuvA subunits (via domain III) on 2 adjacent RuvB subunits; this complex drives branch migration. In the full resolvosome a probable DNA-RuvA(4)-RuvB(12)-RuvC(2) complex forms which resolves the HJ.

Its subcellular location is the cytoplasm. The RuvA-RuvB-RuvC complex processes Holliday junction (HJ) DNA during genetic recombination and DNA repair, while the RuvA-RuvB complex plays an important role in the rescue of blocked DNA replication forks via replication fork reversal (RFR). RuvA specifically binds to HJ cruciform DNA, conferring on it an open structure. The RuvB hexamer acts as an ATP-dependent pump, pulling dsDNA into and through the RuvAB complex. HJ branch migration allows RuvC to scan DNA until it finds its consensus sequence, where it cleaves and resolves the cruciform DNA. This Streptococcus equi subsp. equi (strain 4047) protein is Holliday junction branch migration complex subunit RuvA.